The sequence spans 89 residues: uncharacterized protein (89 aa).

Positions 1–27 (MKKAAAVLLSLGLVFGFSYGAGHVAEA) are cleaved as a signal peptide.

This is an uncharacterized protein from Bacillus subtilis (strain 168).